Consider the following 885-residue polypeptide: Leucine--tRNA ligase (885 aa).

The 'HIGH' region signature appears at 46 to 56; sequence PYPSGALHMGH. A 'KMSKS' region motif is present at residues 638–642; sequence KMSKS. Lys-641 is an ATP binding site.

It belongs to the class-I aminoacyl-tRNA synthetase family.

It is found in the cytoplasm. It catalyses the reaction tRNA(Leu) + L-leucine + ATP = L-leucyl-tRNA(Leu) + AMP + diphosphate. In Xanthomonas campestris pv. campestris (strain B100), this protein is Leucine--tRNA ligase.